Here is a 472-residue protein sequence, read N- to C-terminus: MTRNKPPSLFKTRHAAQVHFVGLGGIGMSGIAEVLLNLGYRVSGSDLRESDITRRLVRMGATFFEGHRAQNLIQADVVVISSAVRKDNPEVVAARQRKIPVIPRAEMLAELMRLKYAVAVAGSHGKTTTTSMVATVLSAAGLDPTAVVGGKVNVLDSNAKLGKSELMVVEADESDGSFLHLHPSIAIVTNIDPEHMDHYGDLDTLQSAFVEFCNRVPFYGLNVLCLDNPNVQALLPRIEKRFVTYGSSHMADYRLENIQLDGFTTRFNAYRREESLGEFRVRMVGAHNAFNALAVIAVAEEMDIPLETVRESLAEFGGVQRRFTVRGEAQGITVVDDYGHHPTEVLATLAGARRAFGRRVVVAFQPHRYTRTHDLMKEFTTSFNDSDVLFVTSVYAAGEERIHGATGDALADAVRAHGHRDVTFVEKRTDLPAALLPRLREGDLVLTLGAGDITHVGPELLELLRTTPLAKD.

An ATP-binding site is contributed by glycine 122–threonine 128.

The protein belongs to the MurCDEF family.

It is found in the cytoplasm. It catalyses the reaction UDP-N-acetyl-alpha-D-muramate + L-alanine + ATP = UDP-N-acetyl-alpha-D-muramoyl-L-alanine + ADP + phosphate + H(+). It participates in cell wall biogenesis; peptidoglycan biosynthesis. Its function is as follows. Cell wall formation. The protein is UDP-N-acetylmuramate--L-alanine ligase of Myxococcus xanthus (strain DK1622).